We begin with the raw amino-acid sequence, 249 residues long: Probable septum site-determining protein MinC (249 aa).

Residues 116-149 (AAVSPPPPPPPPPARAEPAAPVARPAPGRMQRNA) form a disordered region. Residues 119 to 130 (SPPPPPPPPPAR) show a composition bias toward pro residues. Low complexity predominate over residues 131–142 (AEPAAPVARPAP).

The protein belongs to the MinC family. Interacts with MinD and FtsZ.

In terms of biological role, cell division inhibitor that blocks the formation of polar Z ring septums. Rapidly oscillates between the poles of the cell to destabilize FtsZ filaments that have formed before they mature into polar Z rings. Prevents FtsZ polymerization. This chain is Probable septum site-determining protein MinC, found in Xanthomonas campestris pv. campestris (strain ATCC 33913 / DSM 3586 / NCPPB 528 / LMG 568 / P 25).